Here is a 474-residue protein sequence, read N- to C-terminus: MLRFYHWRFPPSLAVVRMLSSPPPPHSHSPFSGGGVNSNSVGGNSKPELQFPQSQPHKLSSSPSSSLKSTVACSNAGAIRRSMATVSQAFSERTESIDSDLGSLVVVSFYKFADFPEHADFRKPLKDLCEKLRVSGGIILAPEGINGSICGIRESVEEVLAFIQRDVRLNGLRQVETPVSPEQEAIHHGHSSSSPLAAGEDAPFRWDHVRVKLKKEIVTLGIPSVSPIERVGTYVSPEEWNELISDPETVVIDVRNTYETRIGKFKGAVDPCTTAFRNFPSWVENQFALKQEGNETQAKVEKEDFSEITHKEDKAEKPKTLPRIAMYCTGGIRCEKASSLLLSQGFEEVYHLKGGILKYLEEVPKTESLWEGECFVFDKRVSVEHGLAQGTHKLCYGCKQPISDEDMEAPEYEYGVSCPYCYSKKSEEEKERARARQTQFEEWGVIGGPDKGRRPATKPDSPRKKINAKLGSSI.

Disordered regions lie at residues 20 to 68 and 179 to 198; these read SSPP…SSLK and VSPE…PLAA. Residues 53–68 show a composition bias toward low complexity; sequence QSQPHKLSSSPSSSLK. One can recognise a Rhodanese domain in the interval 245–368; sequence SDPETVVIDV…YLEEVPKTES (124 aa). Cysteine 328 functions as the Cysteine persulfide intermediate in the catalytic mechanism. Residues 432 to 474 are disordered; sequence RARARQTQFEEWGVIGGPDKGRRPATKPDSPRKKINAKLGSSI.

This is Rhodanese-like domain-containing protein 7 (STR7) from Arabidopsis thaliana (Mouse-ear cress).